The following is a 209-amino-acid chain: V-type ATP synthase subunit D (209 aa).

The protein belongs to the V-ATPase D subunit family.

In terms of biological role, produces ATP from ADP in the presence of a proton gradient across the membrane. This Anaeromyxobacter dehalogenans (strain 2CP-C) protein is V-type ATP synthase subunit D.